A 22-amino-acid polypeptide reads, in one-letter code: Cysteine-rich venom protein notescatin (22 aa).

The span at Ser-1–Asn-15 shows a compositional bias: basic and acidic residues. Positions Ser-1 to Lys-22 are disordered.

The protein belongs to the CRISP family. Post-translationally, contains 8 disulfide bonds. Expressed by the venom gland.

The protein localises to the secreted. This chain is Cysteine-rich venom protein notescatin, found in Notechis scutatus scutatus (Mainland tiger snake).